Here is a 468-residue protein sequence, read N- to C-terminus: MPSNQDYIVRDIGLADFGRKEIAIAETEMPGLMAVRAEYAASQPLKGAKIAGSLHMTIQTAVLIETLKALGADIRWVSCNIYSTQDHAAAAIAAAGIPVFAVKGETLTEYWDYTARLFDWHDGGMPNMILDDGGDATMFVHAGLRAERGDTAFLDAPGSEEEEIFFALIKRMLKEKPKGWFAGLAESIKGVSEETTTGVHRLYILAKEGKLLFPAINVNDSVTKSKFDNLYGCRESLVDGIRRGTDVMMAGKVAMVAGFGDVGKGSAASLRNAGCRVMVSEVDPICALQAAMEGYEVTTMEDAAPRADIFVTATGNKDVITIDHMRSMKDRAIVCNIGHFDNEIQVAGLKNLKWSNIKPQVDEIEFPDGHRIILLSEGRLVNLGNAMGHPSFVMSASFTNQTLAQIELWTNQGKYENQVYTLPKTLDEKVAALHLEKIGVKLTTLRPDQAAYIGVQASGPFKPDHYRY.

Threonine 57, aspartate 132, and glutamate 194 together coordinate substrate. NAD(+) is bound at residue 195 to 197 (TTT). Substrate-binding residues include lysine 224 and aspartate 228. NAD(+) contacts are provided by residues asparagine 229, 258-263 (GFGDVG), glutamate 281, asparagine 316, 337-339 (IGH), and asparagine 382.

Belongs to the adenosylhomocysteinase family. NAD(+) is required as a cofactor.

The protein localises to the cytoplasm. The enzyme catalyses S-adenosyl-L-homocysteine + H2O = L-homocysteine + adenosine. Its pathway is amino-acid biosynthesis; L-homocysteine biosynthesis; L-homocysteine from S-adenosyl-L-homocysteine: step 1/1. In terms of biological role, may play a key role in the regulation of the intracellular concentration of adenosylhomocysteine. The polypeptide is Adenosylhomocysteinase (Methylobacterium sp. (strain 4-46)).